A 1237-amino-acid polypeptide reads, in one-letter code: Anion exchange protein 2 (1237 aa).

Residues 1–238 (MSSAPRRPAS…YNLQERRRIG (238 aa)) form a disordered region. Residues 1-703 (MSSAPRRPAS…SDFRDALDPQ (703 aa)) are Cytoplasmic-facing. 2 stretches are compositionally biased toward basic and acidic residues: residues 38 to 48 (LRTLGVERFEE) and 57 to 74 (GGEE…EYHR). Composition is skewed to basic residues over residues 75–84 (QSSHHIHHPL) and 93–109 (RRRK…RRRP). Residues Ser112, Ser131, Ser144, Ser170, Ser172, and Ser239 each carry the phosphoserine modification. Over residues 119 to 132 (TIEEGEEDEEEASE) the composition is skewed to acidic residues. At Thr253 the chain carries Phosphothreonine. Lys270 is subject to N6-methyllysine. The segment at 285–316 (VRKNAKGSTQAAREGREPGPTPRARPRAPHKP) is disordered. Phosphoserine is present on Ser439. The interval 445–466 (SLLGHHHAQGTESDPHVTEPLI) is disordered. The next 4 helical transmembrane spans lie at 704 to 727 (CLAA…GLLG), 733 to 770 (LIGV…LLVF), 790 to 812 (VWIG…SFLV), and 822 to 843 (IFAF…IKIF). Residues 704 to 1237 (CLAAVIFIYF…DEYNEMPMPV (534 aa)) form a membrane (anion exchange) region. Topologically, residues 844–896 (QEHPLHGCSGSNDSEAGSSSSSNMTWATTILVPDNSSASGQSGQEKPRGQPNT) are extracellular. N-linked (GlcNAc...) asparagine glycosylation is found at Asn855, Asn866, and Asn878. Residues 897-914 (ALLSLVLMAGTFFIAFFL) form a helical membrane-spanning segment. At 915–929 (RKFKNSRFFPGRIRR) the chain is on the cytoplasmic side. 5 helical membrane-spanning segments follow: residues 930-950 (VIGD…DYSI), 984-1006 (PFPV…LIFM), 1032-1053 (LLLI…LAAA), 1087-1132 (VTGL…IQFY), and 1159-1195 (MHLF…TVPL). Cys1169 carries the S-palmitoyl cysteine lipid modification.

Belongs to the anion exchanger (TC 2.A.31) family. In terms of tissue distribution, expressed in the choroid plexus epithelium (at protein level). Expressed in the parotid gland and sublingual salivary gland acinar cells (at protein level). Widely expressed at similar levels in all tissues examined. Expressed in the testis. As to expression, predominantly expressed in stomach although they are also detected at lower levels in other tissues. Expressed in the testis. In terms of tissue distribution, stomach-specific. Expressed at slightly higher levels in lung and stomach than in other tissues.

The protein resides in the apical cell membrane. It localises to the basolateral cell membrane. It carries out the reaction hydrogencarbonate(in) + chloride(out) = hydrogencarbonate(out) + chloride(in). Inhibited by 4,4'-diisothiocyanatostilbene-2,2'-disulfonic acid (DIDS) and acetazolamide. Muscarinic receptor stimulation enhances activity through a Ca(2+)-dependent mechanism. In terms of biological role, sodium-independent anion exchanger which mediates the electroneutral exchange of chloride for bicarbonate ions across the cell membrane. Plays an important role in osteoclast differentiation and function. Regulates bone resorption and calpain-dependent actin cytoskeleton organization in osteoclasts via anion exchange-dependent control of pH. Essential for intracellular pH regulation in CD8(+) T-cells upon CD3 stimulation, modulating CD8(+) T-cell responses. Plays a critical role in male fertility and spermiogenesis. This is Anion exchange protein 2 (Slc4a2) from Mus musculus (Mouse).